Reading from the N-terminus, the 1043-residue chain is Unconventional myosin-Ia (1043 aa).

In terms of domain architecture, Myosin motor spans 8 to 694 (VGVEDLVLLE…TLFYLEEQRR (687 aa)). An ATP-binding site is contributed by 101–108 (GESGAGKT). Residues 571-593 (VTTLMKNLYSKNPNYIRCIKPNE) form an actin-binding region. 3 consecutive IQ domains span residues 697 to 719 (LQQL…HYQL), 720 to 742 (MRKS…HYRK), and 743 to 772 (MKAS…SGAA). The 185-residue stretch at 858–1042 (KASYPQSVPI…KGSRCLEVTV (185 aa)) folds into the TH1 domain.

It belongs to the TRAFAC class myosin-kinesin ATPase superfamily. Myosin family. Phosphorylated by ALPK1.

In terms of biological role, involved in directing the movement of organelles along actin filaments. The polypeptide is Unconventional myosin-Ia (MYO1A) (Bos taurus (Bovine)).